A 438-amino-acid chain; its full sequence is Aspartate--tRNA(Asp/Asn) ligase (438 aa).

E176 lines the L-aspartate pocket. The interval 198 to 201 (QLYK) is aspartate. R220 contacts L-aspartate. Residues 220 to 222 (RAE), 228 to 230 (RHL), and E361 contribute to the ATP site. Positions 361 and 364 each coordinate Mg(2+). Positions 364 and 368 each coordinate L-aspartate. 409-412 (GADR) lines the ATP pocket.

It belongs to the class-II aminoacyl-tRNA synthetase family. Type 2 subfamily. Homodimer. The cofactor is Mg(2+).

The protein resides in the cytoplasm. The catalysed reaction is tRNA(Asx) + L-aspartate + ATP = L-aspartyl-tRNA(Asx) + AMP + diphosphate. In terms of biological role, aspartyl-tRNA synthetase with relaxed tRNA specificity since it is able to aspartylate not only its cognate tRNA(Asp) but also tRNA(Asn). Reaction proceeds in two steps: L-aspartate is first activated by ATP to form Asp-AMP and then transferred to the acceptor end of tRNA(Asp/Asn). This Methanococcus maripaludis (strain C5 / ATCC BAA-1333) protein is Aspartate--tRNA(Asp/Asn) ligase.